Here is a 105-residue protein sequence, read N- to C-terminus: Cell division protein FtsL (105 aa).

Residues 1–24 are Cytoplasmic-facing; it reads MAEKMEKTGQILQMQLKRFSRVEK. A helical transmembrane segment spans residues 25-45; that stretch reads AFYFSIAVTTLIVAISIIFMQ. At 46 to 105 the chain is on the extracellular side; the sequence is TKLLQVQNDLTKINAQIEEKKTELDDAKQEVNELLRAERLKEIANSHDLQLNNENIRIAE.

Belongs to the FtsL family.

It localises to the cell membrane. Essential cell division protein. The polypeptide is Cell division protein FtsL (Streptococcus pneumoniae (strain ATCC BAA-255 / R6)).